The sequence spans 178 residues: Protein GrpE (178 aa).

Belongs to the GrpE family. Homodimer.

Its subcellular location is the cytoplasm. Participates actively in the response to hyperosmotic and heat shock by preventing the aggregation of stress-denatured proteins, in association with DnaK and GrpE. It is the nucleotide exchange factor for DnaK and may function as a thermosensor. Unfolded proteins bind initially to DnaJ; upon interaction with the DnaJ-bound protein, DnaK hydrolyzes its bound ATP, resulting in the formation of a stable complex. GrpE releases ADP from DnaK; ATP binding to DnaK triggers the release of the substrate protein, thus completing the reaction cycle. Several rounds of ATP-dependent interactions between DnaJ, DnaK and GrpE are required for fully efficient folding. The polypeptide is Protein GrpE (Rickettsia prowazekii (strain Madrid E)).